The sequence spans 155 residues: 6,7-dimethyl-8-ribityllumazine synthase (155 aa).

Residues phenylalanine 24, 58 to 60 (AFE), and 82 to 84 (AVI) each bind 5-amino-6-(D-ribitylamino)uracil. 87 to 88 (ST) is a binding site for (2S)-2-hydroxy-3-oxobutyl phosphate. Histidine 90 serves as the catalytic Proton donor. 5-amino-6-(D-ribitylamino)uracil is bound at residue phenylalanine 115. Arginine 129 contributes to the (2S)-2-hydroxy-3-oxobutyl phosphate binding site.

The protein belongs to the DMRL synthase family.

It carries out the reaction (2S)-2-hydroxy-3-oxobutyl phosphate + 5-amino-6-(D-ribitylamino)uracil = 6,7-dimethyl-8-(1-D-ribityl)lumazine + phosphate + 2 H2O + H(+). It participates in cofactor biosynthesis; riboflavin biosynthesis; riboflavin from 2-hydroxy-3-oxobutyl phosphate and 5-amino-6-(D-ribitylamino)uracil: step 1/2. Functionally, catalyzes the formation of 6,7-dimethyl-8-ribityllumazine by condensation of 5-amino-6-(D-ribitylamino)uracil with 3,4-dihydroxy-2-butanone 4-phosphate. This is the penultimate step in the biosynthesis of riboflavin. The polypeptide is 6,7-dimethyl-8-ribityllumazine synthase (Acetivibrio thermocellus (strain ATCC 27405 / DSM 1237 / JCM 9322 / NBRC 103400 / NCIMB 10682 / NRRL B-4536 / VPI 7372) (Clostridium thermocellum)).